The following is a 212-amino-acid chain: ATP-dependent Clp protease proteolytic subunit (212 aa).

Residue Ser-106 is the Nucleophile of the active site. The active site involves His-131.

This sequence belongs to the peptidase S14 family. Fourteen ClpP subunits assemble into 2 heptameric rings which stack back to back to give a disk-like structure with a central cavity, resembling the structure of eukaryotic proteasomes.

The protein resides in the cytoplasm. It carries out the reaction Hydrolysis of proteins to small peptides in the presence of ATP and magnesium. alpha-casein is the usual test substrate. In the absence of ATP, only oligopeptides shorter than five residues are hydrolyzed (such as succinyl-Leu-Tyr-|-NHMec, and Leu-Tyr-Leu-|-Tyr-Trp, in which cleavage of the -Tyr-|-Leu- and -Tyr-|-Trp bonds also occurs).. Functionally, cleaves peptides in various proteins in a process that requires ATP hydrolysis. Has a chymotrypsin-like activity. Plays a major role in the degradation of misfolded proteins. This Rhodopseudomonas palustris (strain HaA2) protein is ATP-dependent Clp protease proteolytic subunit.